A 472-amino-acid polypeptide reads, in one-letter code: Lactate utilization protein B (472 aa).

2 consecutive 4Fe-4S ferredoxin-type domains span residues 304–334 (GTEF…GHSY) and 353–382 (YDDY…LHEL). 7 residues coordinate [4Fe-4S] cluster: cysteine 313, cysteine 316, cysteine 319, cysteine 323, cysteine 366, cysteine 369, and cysteine 373.

This sequence belongs to the LutB/YkgF family.

Its function is as follows. Is involved in L-lactate degradation and allows cells to grow with lactate as the sole carbon source. Has probably a role as an electron transporter during oxidation of L-lactate. The sequence is that of Lactate utilization protein B from Anoxybacillus flavithermus (strain DSM 21510 / WK1).